Consider the following 549-residue polypeptide: Probable protein kinase UbiB (549 aa).

The Protein kinase domain occupies 123–504 (DFDETALASA…QRNNTGFSRL (382 aa)). Residues 129–137 (LASASIAQV) and lysine 156 contribute to the ATP site. The active-site Proton acceptor is aspartate 291. A helical membrane pass occupies residues 505–525 (MILGIAIAGTFWKFEMLPLWV).

It belongs to the ABC1 family. UbiB subfamily.

It localises to the cell inner membrane. It participates in cofactor biosynthesis; ubiquinone biosynthesis [regulation]. Its function is as follows. Is probably a protein kinase regulator of UbiI activity which is involved in aerobic coenzyme Q (ubiquinone) biosynthesis. The sequence is that of Probable protein kinase UbiB from Glaesserella parasuis serovar 5 (strain SH0165) (Haemophilus parasuis).